The following is a 226-amino-acid chain: Clarin-3 (226 aa).

The chain crosses the membrane as a helical span at residues 8–28 (LMFLSGFLTSLGSVVVICSIL). Asparagine 46 and asparagine 83 each carry an N-linked (GlcNAc...) asparagine glycan. The next 3 membrane-spanning stretches (helical) occupy residues 92–112 (VVII…MFTF), 128–148 (GVYT…VLFV), and 181–201 (FWLI…IIFY).

It belongs to the clarin family.

Its subcellular location is the membrane. This is Clarin-3 (Clrn3) from Rattus norvegicus (Rat).